Consider the following 140-residue polypeptide: Large ribosomal subunit protein bL17 (140 aa).

The disordered stretch occupies residues 120–140 (EDAKGQDSGPVMVDEDDFAEA).

It belongs to the bacterial ribosomal protein bL17 family. In terms of assembly, part of the 50S ribosomal subunit. Contacts protein L32.

This chain is Large ribosomal subunit protein bL17, found in Erythrobacter litoralis (strain HTCC2594).